The primary structure comprises 1438 residues: DNA polymerase III PolC-type (1438 aa).

An Exonuclease domain is found at 422 to 578 (YVVFDVETTG…YDTEATAYIF (157 aa)).

This sequence belongs to the DNA polymerase type-C family. PolC subfamily.

Its subcellular location is the cytoplasm. It catalyses the reaction DNA(n) + a 2'-deoxyribonucleoside 5'-triphosphate = DNA(n+1) + diphosphate. In terms of biological role, required for replicative DNA synthesis. This DNA polymerase also exhibits 3' to 5' exonuclease activity. This chain is DNA polymerase III PolC-type, found in Staphylococcus aureus (strain MSSA476).